We begin with the raw amino-acid sequence, 637 residues long: tRNA uridine 5-carboxymethylaminomethyl modification enzyme MnmG (637 aa).

18–23 (GAGHAG) provides a ligand contact to FAD. 282-296 (GPRYCPSIEDKIVRF) contributes to the NAD(+) binding site.

This sequence belongs to the MnmG family. As to quaternary structure, homodimer. Heterotetramer of two MnmE and two MnmG subunits. FAD is required as a cofactor.

The protein localises to the cytoplasm. Its function is as follows. NAD-binding protein involved in the addition of a carboxymethylaminomethyl (cmnm) group at the wobble position (U34) of certain tRNAs, forming tRNA-cmnm(5)s(2)U34. This chain is tRNA uridine 5-carboxymethylaminomethyl modification enzyme MnmG, found in Pediococcus pentosaceus (strain ATCC 25745 / CCUG 21536 / LMG 10740 / 183-1w).